A 132-amino-acid polypeptide reads, in one-letter code: Small ribosomal subunit protein uS8 (132 aa).

This sequence belongs to the universal ribosomal protein uS8 family. As to quaternary structure, part of the 30S ribosomal subunit. Contacts proteins S5 and S12.

In terms of biological role, one of the primary rRNA binding proteins, it binds directly to 16S rRNA central domain where it helps coordinate assembly of the platform of the 30S subunit. In Tropheryma whipplei (strain Twist) (Whipple's bacillus), this protein is Small ribosomal subunit protein uS8.